Here is a 614-residue protein sequence, read N- to C-terminus: MKDSLVLKTIQEKIKNLGSLPGCYLWKNELGQVIYVGKALKLQSRVRSYLNPNQKDRKTRALFVELYDLDWIATGTEKEALLLEATLIKKYNPKFNVRLKDDKKYPFLCVSTSEDYPMVFLTRKVKDNGDRYFGPFTDVKAARDTLELIHRIFPIRKTKLKLPLPKPQRPCLNFHMGRCLGPCQGNVTKDTYSELVDEILRFLEGKKERLVADLKKAMMDASSKMEYERAGFLKQRIEKINQLREKQTVVSMDGGDEDILGISKREDEGQILILEVRGGRLEGKKSFPLTGLSFSDDEEAFTSFLRDYYLNVTVLPSVVYLPTSAKGNYDVFLEAILEKFGTSIKLKFPEMGPKKSLLRLAEKNADLSLTERILATKLRDQTVAMKELQEKLNLPTLPRTIECYDISHFQGSLPVASGVMFVEGKPYKPGYRHYKMRGYEGINDPGMIHEVIARRLSHLVNEEEPLPDLIVIDGGLTQLSRAAEAANALDLGHIPMVGLAKKREEIYFPGEKHPYSFDQHSPMMRLLRNLRDEAHRFGVTFQRLQRKKKALKSILDDIPDIGASRRKSILMYFQAKKKVTDATRQELEKVQGIGPVLAEKIFTNIQNLKKIEPK.

Residues 19–97 (SLPGCYLWKN…IKKYNPKFNV (79 aa)) form the GIY-YIG domain. Residues 208 to 243 (ERLVADLKKAMMDASSKMEYERAGFLKQRIEKINQL) form the UVR domain.

The protein belongs to the UvrC family. Interacts with UvrB in an incision complex.

The protein resides in the cytoplasm. In terms of biological role, the UvrABC repair system catalyzes the recognition and processing of DNA lesions. UvrC both incises the 5' and 3' sides of the lesion. The N-terminal half is responsible for the 3' incision and the C-terminal half is responsible for the 5' incision. This is UvrABC system protein C from Leptospira biflexa serovar Patoc (strain Patoc 1 / Ames).